A 281-amino-acid chain; its full sequence is Ras-related protein Rab-40C (281 aa).

GTP is bound by residues Ser-23, Gly-26, Lys-27, and Ser-46. Residues 41-49 form a switch-I region; it reads SPYAYSNGI. Ser-46 and Asp-69 together coordinate Mg(2+). Positions 72, 126, and 127 each coordinate GTP. Residues 72–88 form a switch-II region; it reads GQGRFCTIFRSYSRGAQ. Residues 175–228 enclose the SOCS box domain; sequence LMRHGMEKIWRPNRVFSLQDLCCRAIVSCTPVHLIDKLPLPVTIKSHLKSFSMA. The disordered stretch occupies residues 245 to 281; sequence SGAGGSGSKGNSLKRSKSIRPPQSPPQNCSRSNCKIS. The span at 270–281 shows a compositional bias: polar residues; the sequence is PQNCSRSNCKIS. Residue Cys-273 is the site of S-palmitoyl cysteine attachment. Cys-278 is lipidated: S-geranylgeranyl cysteine.

Belongs to the small GTPase superfamily. Rab family. Component of the cullin-5-RING E3 ubiquitin-protein ligase complex (ECS(RAB40C) complex) composed of CUL5, Elongin BC (ELOB and ELOC), RNF7/RBX2 and RAB40C. Interacts with protein phosphatase 6 (PP6) complex components ANKRD28, ANKRD52, PPP6C, PP6R1 and PP6R2; the interaction leads to ANKRD28 ubiquitination and decreased PP6 activity. Interacts with DAB2IP; DAB2IP acts as a GAP for RAB40C. Mg(2+) is required as a cofactor.

Its subcellular location is the cell membrane. It is found in the cytoplasm. It localises to the cytosol. The protein resides in the golgi apparatus membrane. It catalyses the reaction GTP + H2O = GDP + phosphate + H(+). Its pathway is protein modification; protein ubiquitination. With respect to regulation, regulated by guanine nucleotide exchange factors (GEFs) which promote the exchange of bound GDP for free GTP. Regulated by GTPase activating proteins (GAPs) including DAB2IP, which increase the GTP hydrolysis activity. Inhibited by GDP dissociation inhibitors (GDIs). Its function is as follows. RAB40C small GTPase acts as substrate-recognition component of the ECS(RAB40C) E3 ubiquitin ligase complex which mediates the ubiquitination and subsequent proteasomal degradation of target proteins. The Rab40 subfamily belongs to the Rab family that are key regulators of intracellular membrane trafficking, from the formation of transport vesicles to their fusion with membranes. Rabs cycle between an inactive GDP-bound form and an active GTP-bound form that is able to recruit to membranes different sets of downstream effectors directly responsible for vesicle formation, movement, tethering and fusion. As part of the ECS(RAB40C) complex, mediates ANKRD28 ubiquitination and degradation, thereby inhibiting protein phosphatase 6 (PP6) complex activity and focal adhesion assembly during cell migration. Also negatively regulate lipid droplets accumulation in a GTP-dependent manner. This is Ras-related protein Rab-40C from Mus musculus (Mouse).